Here is a 140-residue protein sequence, read N- to C-terminus: Phosphoribosyl-AMP cyclohydrolase (140 aa).

Asp-78 is a binding site for Mg(2+). Cys-79 contributes to the Zn(2+) binding site. Residues Asp-80 and Asp-82 each coordinate Mg(2+). 2 residues coordinate Zn(2+): Cys-96 and Cys-103.

It belongs to the PRA-CH family. Homodimer. The cofactor is Mg(2+). It depends on Zn(2+) as a cofactor.

The protein localises to the cytoplasm. The enzyme catalyses 1-(5-phospho-beta-D-ribosyl)-5'-AMP + H2O = 1-(5-phospho-beta-D-ribosyl)-5-[(5-phospho-beta-D-ribosylamino)methylideneamino]imidazole-4-carboxamide. Its pathway is amino-acid biosynthesis; L-histidine biosynthesis; L-histidine from 5-phospho-alpha-D-ribose 1-diphosphate: step 3/9. Catalyzes the hydrolysis of the adenine ring of phosphoribosyl-AMP. This chain is Phosphoribosyl-AMP cyclohydrolase, found in Ralstonia nicotianae (strain ATCC BAA-1114 / GMI1000) (Ralstonia solanacearum).